The following is a 111-amino-acid chain: Large ribosomal subunit protein uL23 (111 aa).

This sequence belongs to the universal ribosomal protein uL23 family. In terms of assembly, part of the 50S ribosomal subunit. Contacts protein L29, and trigger factor when it is bound to the ribosome.

In terms of biological role, one of the early assembly proteins it binds 23S rRNA. One of the proteins that surrounds the polypeptide exit tunnel on the outside of the ribosome. Forms the main docking site for trigger factor binding to the ribosome. This Chlamydia trachomatis serovar L2 (strain ATCC VR-902B / DSM 19102 / 434/Bu) protein is Large ribosomal subunit protein uL23.